A 251-amino-acid chain; its full sequence is MQCAVLLVLLGVVAASPIIPEAARALYYNDGMFEGDIKLRAGRQPARVGAAILGDEYLWSGGVIPYTFAGVSGADQSAILSGMQELEEKTCIRFVPRTTESDYVEIFTSGSGCWSYVGRISGAQQVSLQANGCVYHGTIIHELMHAIGFYHEHTRMDRDNYVTINYQNVDPSMTSNFDIDTYSRYVGEDYQYYSIMHYGKYSFSIQWGVLETIVPLQNGIDLTDPYDKAHMLQTDANQINNLYTNECSLRH.

A signal peptide spans M1–A15. Residues S16–G49 constitute a propeptide, activation peptide. In terms of domain architecture, Peptidase M12A spans A50–S248. 2 disulfides stabilise this stretch: C91-C247 and C113-C133. Zn(2+) is bound at residue H141. E142 is a catalytic residue. Zn(2+) is bound by residues H145 and H151. Positions R250–H251 are excised as a propeptide.

As to quaternary structure, monomer. Zn(2+) serves as cofactor.

The catalysed reaction is Hydrolysis of peptide bonds in substrates containing five or more amino acids, preferentially with Ala in P1', and Pro in P2'.. Metalloprotease. This protease prefers to cleave in front of small aliphatic residues (P1'). The presence of Lys or Arg in the P1 and P2 position yields high-turnover substrates. In the P3 position the enzyme prefers Pro &gt; Val &gt; Leu &gt; Ala &gt; Gly. In Astacus astacus (Noble crayfish), this protein is Astacin.